The chain runs to 150 residues: Interleukin-17A (150 aa).

Residues Met-1–Ala-17 form the signal peptide. Residues Ser-54 to Glu-75 form a disordered region. Polar residues predominate over residues Leu-62–Ser-72. Asn-63 carries an N-linked (GlcNAc...) asparagine glycan. Disulfide bonds link Cys-89/Cys-139 and Cys-94/Cys-141.

The protein belongs to the IL-17 family. Homodimer. Forms complexes with IL17RA and IL17RC receptors with 2:1 binding stoichiometry: two receptor chains for one interleukin molecule. IL17A homodimer preferentially drives the formation of IL17RA-IL17RC heterodimeric receptor complex. IL17A homodimer adopts an asymmetrical ternary structure with one IL17RA molecule, allowing for high affinity interactions of one IL17A monomer with one IL17RA molecule (via D1 and D2 domains), while disfavoring binding of a second IL17RA molecule on the other IL17A monomer. Heterodimer with IL17F. IL17A-IL17F forms complexes with IL17RA-IL17RC, but with lower affinity when compared to IL17A homodimer. IL17RA and IL17RC chains cannot distinguish between IL17A and IL17F molecules, potentially enabling the formation of topologically distinct complexes.

It is found in the secreted. In terms of biological role, effector cytokine of innate and adaptive immune system involved in antimicrobial host defense and maintenance of tissue integrity. Signals via IL17RA-IL17RC heterodimeric receptor complex, triggering homotypic interaction of IL17RA and IL17RC chains with TRAF3IP2 adapter. This leads to downstream TRAF6-mediated activation of NF-kappa-B and MAPkinase pathways ultimately resulting in transcriptional activation of cytokines, chemokines, antimicrobial peptides and matrix metalloproteinases, with potential strong immune inflammation. Plays an important role in connecting T cell-mediated adaptive immunity and acute inflammatory response to destroy extracellular bacteria and fungi. As a signature effector cytokine of T-helper 17 cells (Th17), primarily induces neutrophil activation and recruitment at infection and inflammatory sites. In airway epithelium, mediates neutrophil chemotaxis via induction of CXCL1 and CXCL5 chemokines. In secondary lymphoid organs, contributes to germinal center formation by regulating the chemotactic response of B cells to CXCL12 and CXCL13, enhancing retention of B cells within the germinal centers, B cell somatic hypermutation rate and selection toward plasma cells. Effector cytokine of a subset of gamma-delta T cells that functions as part of an inflammatory circuit downstream IL1B, TLR2 and IL23A-IL12B to promote neutrophil recruitment for efficient bacterial clearance. Effector cytokine of innate immune cells including invariant natural killer cell (iNKT) and group 3 innate lymphoid cells that mediate initial neutrophilic inflammation. Involved in the maintenance of the integrity of epithelial barriers during homeostasis and pathogen infection. Upon acute injury, has a direct role in epithelial barrier formation by regulating OCLN localization and tight junction biogenesis. As part of the mucosal immune response induced by commensal bacteria, enhances host's ability to resist pathogenic bacterial and fungal infections by promoting neutrophil recruitment and antimicrobial peptides release. In synergy with IL17F, mediates the production of antimicrobial beta-defensins DEFB1, DEFB103A, and DEFB104A by mucosal epithelial cells, limiting the entry of microbes through the epithelial barriers. Involved in antiviral host defense through various mechanisms. The protein is Interleukin-17A (Il17a) of Rattus norvegicus (Rat).